Reading from the N-terminus, the 143-residue chain is Calcitonin (143 aa).

The signal sequence occupies residues 1–25 (MGFGKSSPFLAFSILVLCQAGSLQA). The propeptide occupies 26–84 (TPLRSALETLPDPGALSEKEGRLLLAALVKAYVQRKTNELEQEEEQEETEDSSLDSSRA). At Ser-42 the chain carries Phosphoserine. The segment at 62-86 (TNELEQEEEQEETEDSSLDSSRAKR) is disordered. Residues 65 to 78 (LEQEEEQEETEDSS) are compositionally biased toward acidic residues. A disulfide bond links Cys-87 and Cys-93. Positions 112–143 (GFGPETPGKKRDIANSLEKDLSSHFGVPTDAN) are disordered. Proline amide is present on Pro-118. Basic and acidic residues predominate over residues 118–133 (PGKKRDIANSLEKDLS). Residues 122 to 143 (RDIANSLEKDLSSHFGVPTDAN) constitute a propeptide that is removed on maturation.

It belongs to the calcitonin family.

It localises to the secreted. Calcitonin is a peptide hormone that causes a rapid but short-lived drop in the level of calcium and phosphate in blood by promoting the incorporation of those ions in the bones. Calcitonin function is mediated by the calcitonin receptor/CALCR and the CALCR-RAMP2 (AMYR2) receptor complex. The protein is Calcitonin (CALCA) of Ovis aries (Sheep).